A 318-amino-acid polypeptide reads, in one-letter code: Methionyl-tRNA formyltransferase (318 aa).

112–115 (SILP) lines the (6S)-5,6,7,8-tetrahydrofolate pocket.

This sequence belongs to the Fmt family.

The catalysed reaction is L-methionyl-tRNA(fMet) + (6R)-10-formyltetrahydrofolate = N-formyl-L-methionyl-tRNA(fMet) + (6S)-5,6,7,8-tetrahydrofolate + H(+). Attaches a formyl group to the free amino group of methionyl-tRNA(fMet). The formyl group appears to play a dual role in the initiator identity of N-formylmethionyl-tRNA by promoting its recognition by IF2 and preventing the misappropriation of this tRNA by the elongation apparatus. This is Methionyl-tRNA formyltransferase from Shewanella baltica (strain OS185).